The primary structure comprises 89 residues: Small ribosomal subunit protein uS14A (89 aa).

The protein belongs to the universal ribosomal protein uS14 family. In terms of assembly, part of the 30S ribosomal subunit. Contacts proteins S3 and S10.

In terms of biological role, binds 16S rRNA, required for the assembly of 30S particles and may also be responsible for determining the conformation of the 16S rRNA at the A site. This Limosilactobacillus reuteri (strain DSM 20016) (Lactobacillus reuteri) protein is Small ribosomal subunit protein uS14A.